The sequence spans 82 residues: MSDVGEIAADRLKSFVERIERLEEEKSGLQEDIKEVYSEAKGTGFDVKIIRQIIRLRKMDKADRQEQRAILEMYEEALGMTE.

It belongs to the UPF0335 family.

In Azospirillum brasilense, this protein is UPF0335 protein pRhico085.